Here is a 507-residue protein sequence, read N- to C-terminus: ATP synthase subunit alpha, chloroplastic (507 aa).

170-177 (GDRQTGKT) serves as a coordination point for ATP.

Belongs to the ATPase alpha/beta chains family. F-type ATPases have 2 components, CF(1) - the catalytic core - and CF(0) - the membrane proton channel. CF(1) has five subunits: alpha(3), beta(3), gamma(1), delta(1), epsilon(1). CF(0) has four main subunits: a, b, b' and c.

Its subcellular location is the plastid. The protein resides in the chloroplast thylakoid membrane. It carries out the reaction ATP + H2O + 4 H(+)(in) = ADP + phosphate + 5 H(+)(out). Produces ATP from ADP in the presence of a proton gradient across the membrane. The alpha chain is a regulatory subunit. The chain is ATP synthase subunit alpha, chloroplastic from Solanum bulbocastanum (Wild potato).